The following is a 445-amino-acid chain: Serine--tRNA ligase (445 aa).

An L-serine-binding site is contributed by 250-252 (TAE). 281–283 (RAE) serves as a coordination point for ATP. L-serine is bound at residue Glu304. Residue 368-371 (EISS) coordinates ATP. Ser404 provides a ligand contact to L-serine.

It belongs to the class-II aminoacyl-tRNA synthetase family. Type-1 seryl-tRNA synthetase subfamily. As to quaternary structure, homodimer. The tRNA molecule binds across the dimer.

Its subcellular location is the cytoplasm. It catalyses the reaction tRNA(Ser) + L-serine + ATP = L-seryl-tRNA(Ser) + AMP + diphosphate + H(+). The catalysed reaction is tRNA(Sec) + L-serine + ATP = L-seryl-tRNA(Sec) + AMP + diphosphate + H(+). Its pathway is aminoacyl-tRNA biosynthesis; selenocysteinyl-tRNA(Sec) biosynthesis; L-seryl-tRNA(Sec) from L-serine and tRNA(Sec): step 1/1. Its function is as follows. Catalyzes the attachment of serine to tRNA(Ser). Is also able to aminoacylate tRNA(Sec) with serine, to form the misacylated tRNA L-seryl-tRNA(Sec), which will be further converted into selenocysteinyl-tRNA(Sec). This Azorhizobium caulinodans (strain ATCC 43989 / DSM 5975 / JCM 20966 / LMG 6465 / NBRC 14845 / NCIMB 13405 / ORS 571) protein is Serine--tRNA ligase.